Consider the following 339-residue polypeptide: ATPase GET3 (339 aa).

Residue 34–41 coordinates ATP; it reads KGGVGKTT. The active site involves Asp63. Residues Glu244 and Asn271 each contribute to the ATP site. Positions 282 and 285 each coordinate Zn(2+).

This sequence belongs to the arsA ATPase family. As to quaternary structure, homodimer.

The protein localises to the cytoplasm. It is found in the endoplasmic reticulum. Functionally, ATPase required for the post-translational delivery of tail-anchored (TA) proteins to the endoplasmic reticulum. Recognizes and selectively binds the transmembrane domain of TA proteins in the cytosol. This complex then targets to the endoplasmic reticulum by membrane-bound receptors, where the tail-anchored protein is released for insertion. This process is regulated by ATP binding and hydrolysis. ATP binding drives the homodimer towards the closed dimer state, facilitating recognition of newly synthesized TA membrane proteins. ATP hydrolysis is required for insertion. Subsequently, the homodimer reverts towards the open dimer state, lowering its affinity for the membrane-bound receptor, and returning it to the cytosol to initiate a new round of targeting. In Podospora anserina (strain S / ATCC MYA-4624 / DSM 980 / FGSC 10383) (Pleurage anserina), this protein is ATPase GET3.